The following is a 184-amino-acid chain: MKNVTDPFLSLSYWPSAGSFGFNTDILATNPINLSVVLGVLIFFGKGVLSDLLDNRKQRILKTIRNSEELREGALEQLEKARSRLRKVEKEADQFRVNGYSEIEREKLNLINSTSKTLEQLENYKNETIHFEQQRAINEVRQRVFQQALEGALGTLNSCLNNELHLRTISTNIGMFGTMKEITD.

A helical transmembrane segment spans residues 27-49 (LATNPINLSVVLGVLIFFGKGVL).

The protein belongs to the ATPase B chain family. In terms of assembly, F-type ATPases have 2 components, F(1) - the catalytic core - and F(0) - the membrane proton channel. F(1) has five subunits: alpha(3), beta(3), gamma(1), delta(1), epsilon(1). F(0) has four main subunits: a(1), b(1), b'(1) and c(10-14). The alpha and beta chains form an alternating ring which encloses part of the gamma chain. F(1) is attached to F(0) by a central stalk formed by the gamma and epsilon chains, while a peripheral stalk is formed by the delta, b and b' chains.

The protein localises to the plastid. Its subcellular location is the chloroplast thylakoid membrane. F(1)F(0) ATP synthase produces ATP from ADP in the presence of a proton or sodium gradient. F-type ATPases consist of two structural domains, F(1) containing the extramembraneous catalytic core and F(0) containing the membrane proton channel, linked together by a central stalk and a peripheral stalk. During catalysis, ATP synthesis in the catalytic domain of F(1) is coupled via a rotary mechanism of the central stalk subunits to proton translocation. In terms of biological role, component of the F(0) channel, it forms part of the peripheral stalk, linking F(1) to F(0). This is ATP synthase subunit b, chloroplastic from Morus indica (Mulberry).